The chain runs to 953 residues: MMSSLSVEGMLLKSARESCLPARVNQRRNGDLRRLNHHRQSSFVRCLTPARVSRPELRSSGLTPPRAVLNPVSPPVTTAKKRVFTFGKGRSEGNRDMKSLLGGKGANLAEMSSIGLSVPPGLTISTEACEEYQQNGKSLPPGLWDEISEGLDYVQKEMSASLGDPSKPLPLSVRSGAAISMPGMMDTVLNLGLNDEVVAGLAGKSGARFAYDSYRRFLDMFGNVVMGIPHSLFDEKLEQMKAEKGIHLDTDLTAADLKDLVEKYKNVYVEAKGEKFPTDPKKQLELAVNAVFDSWDSPRANKYRSINQITGLKGTAVNIQSMVFGNMGNTSGTGVLFTRNPSTGEKKLYGEFLINAQGEDVVAGIRTPEDLGTMETCMPDAYKELVENCEILEGHYKDMMDIEFTVQENRLWMLQCRTGKRTGKGAVRIAVDMVNEWLIDTRTAIKRVETQHLDQLLHPQFEDPSAYKSHVVATGLPASPGAAVGQVCFSAEDAETWHAQGKSAILVRTETSPEDVGGMHAAAGILTARGGMTSHAAVVARGWGKCCVSGCADIRVNDDMKIFTIGDRVIKEGDWLSLNGTTGEVILGKQLLAPPAMSNDLEIFMSWADQARRLKVMANADTPNDALTARNNGAQGIGLCRTEHMFFASDERIKAVRKMIMAVTPEQRKVALDLLLPYQRSDFEGIFRAMDGLPVTIRLLDPPLHEFLPEGDLEHIVNELAVDTGMSADEIYSKIENLSEVNPMLGFRGCRLGISYPELTEMQVRAIFQAAVSMTNQGVTVIPEIMVPLVGTPQELRHQISVIRGVAANVFAEMGVTLEYKVGTMIEIPRAALIAEEIGKEADFFSFGTNDLTQMTFGYSRDDVGKFLQIYLAQGILQHDPFEVIDQKGVGQLIKMATEKGRAANPNLKVGICGEHGGEPSSVAFFDGVGLDYVSCSPFRVPIARLAAAQVIV.

The N-terminal 77 residues, 1 to 77 (MMSSLSVEGM…VLNPVSPPVT (77 aa)), are a transit peptide targeting the chloroplast. The tract at residues 55-74 (PELRSSGLTPPRAVLNPVSP) is disordered. Thr-533 carries the phosphothreonine; by PDRP1 modification. His-535 acts as the Tele-phosphohistidine intermediate in catalysis. Substrate contacts are provided by Arg-641, Arg-698, Glu-827, Gly-848, Thr-849, Asn-850, and Asp-851. A Mg(2+)-binding site is contributed by Glu-827. Residue Asp-851 participates in Mg(2+) binding. Cys-913 acts as the Proton donor in catalysis.

This sequence belongs to the PEP-utilizing enzyme family. In terms of assembly, homotetramer. The cofactor is Mg(2+). Phosphorylation of Thr-533 in the dark inactivates the enzyme. Dephosphorylation upon light stimulation reactivates the enzyme.

The protein resides in the plastid. The protein localises to the chloroplast. The catalysed reaction is pyruvate + phosphate + ATP = phosphoenolpyruvate + AMP + diphosphate + H(+). It participates in photosynthesis; C4 acid pathway. Its activity is regulated as follows. Activated by light-induced dephosphorylation. Inhibited by dark-induced phosphorylation. Both reactions are catalyzed by PDRP1. Inactivated by cold due to the dissociation of the homotetramer. Its function is as follows. Formation of phosphoenolpyruvate, which is the primary acceptor of CO(2) in C4 and some Crassulacean acid metabolism plants. This is Pyruvate, phosphate dikinase, chloroplastic from Flaveria bidentis (Coastal plain yellowtops).